We begin with the raw amino-acid sequence, 182 residues long: Ribosomal RNA small subunit methyltransferase G (182 aa).

S-adenosyl-L-methionine is bound by residues glycine 58, phenylalanine 63, 109-110 (IE), and arginine 123.

This sequence belongs to the methyltransferase superfamily. RNA methyltransferase RsmG family.

It localises to the cytoplasm. The catalysed reaction is guanosine(527) in 16S rRNA + S-adenosyl-L-methionine = N(7)-methylguanosine(527) in 16S rRNA + S-adenosyl-L-homocysteine. Its function is as follows. Specifically methylates the N7 position of guanine in position 527 of 16S rRNA. The chain is Ribosomal RNA small subunit methyltransferase G from Campylobacter fetus subsp. fetus (strain 82-40).